The following is a 141-amino-acid chain: Nucleoside diphosphate kinase (141 aa).

ATP-binding residues include Lys11, Phe59, Arg87, Thr93, Arg104, and Asn114. Catalysis depends on His117, which acts as the Pros-phosphohistidine intermediate.

It belongs to the NDK family. In terms of assembly, homotetramer. Mg(2+) is required as a cofactor.

The protein localises to the cytoplasm. The catalysed reaction is a 2'-deoxyribonucleoside 5'-diphosphate + ATP = a 2'-deoxyribonucleoside 5'-triphosphate + ADP. It catalyses the reaction a ribonucleoside 5'-diphosphate + ATP = a ribonucleoside 5'-triphosphate + ADP. Major role in the synthesis of nucleoside triphosphates other than ATP. The ATP gamma phosphate is transferred to the NDP beta phosphate via a ping-pong mechanism, using a phosphorylated active-site intermediate. This chain is Nucleoside diphosphate kinase, found in Vibrio parahaemolyticus serotype O3:K6 (strain RIMD 2210633).